The primary structure comprises 473 residues: MFS transporter prlG (473 aa).

Basic and acidic residues predominate over residues 1 to 12 (MSSTDAEAKNEE). A disordered region spans residues 1-27 (MSSTDAEAKNEEAVDWEGPDDPENPRN). Acidic residues predominate over residues 13-22 (AVDWEGPDDP). 11 helical membrane-spanning segments follow: residues 37 to 57 (VLLVSSFTLYSNLAAVMFAPG), 71 to 91 (IVASLTVSIYILGYVFGPFLL), 101 to 121 (LIIYHICNAVYIAFTIGCALS), 125 to 145 (AMFLVFRFICGCAASAPMAIG), 163 to 183 (ALFGLGPLLGPVIGPVVGGFV), 191 to 211 (WTFWLVLILAGVVSLLALVLM), 266 to 286 (PIVFLLSVYCAFMFGLTYLLF), 305 to 325 (GLAYLGLGVGMIISIGLFAVL), 345 to 365 (LILMIWSSPLVPIGFFWYGWS), 372 to 392 (WIVPILGTSVIGLGAFLILMP), and 409 to 429 (ALAANTVLRSLFGAVLPLAGP).

It belongs to the major facilitator superfamily.

It localises to the cell membrane. Its function is as follows. Efflux pump that might be required for efficient secretion of pyrrolocin or other secondary metabolies produced by the pyrrolocin gene cluster. This is MFS transporter prlG from Fungal sp. (strain NRRL 50135).